The following is a 160-amino-acid chain: Ribosomal RNA large subunit methyltransferase H (160 aa).

Residues Leu-77 and Gly-109 each coordinate S-adenosyl-L-methionine.

Belongs to the RNA methyltransferase RlmH family. In terms of assembly, homodimer.

The protein localises to the cytoplasm. The enzyme catalyses pseudouridine(1915) in 23S rRNA + S-adenosyl-L-methionine = N(3)-methylpseudouridine(1915) in 23S rRNA + S-adenosyl-L-homocysteine + H(+). Functionally, specifically methylates the pseudouridine at position 1915 (m3Psi1915) in 23S rRNA. The sequence is that of Ribosomal RNA large subunit methyltransferase H from Moorella thermoacetica (strain ATCC 39073 / JCM 9320).